We begin with the raw amino-acid sequence, 401 residues long: Probable acid ceramidase (401 aa).

The N-terminal stretch at 1 to 22 is a signal peptide; the sequence is MKPVAISLSLLLLVTLLPGSEQ. Residues Asn101, Asn303, and Asn371 are each glycosylated (N-linked (GlcNAc...) asparagine).

Belongs to the acid ceramidase family.

The catalysed reaction is an N-acyl-sphingoid base + H2O = a sphingoid base + a fatty acid. It carries out the reaction an N-acylsphing-4-enine + H2O = sphing-4-enine + a fatty acid. It catalyses the reaction an N-acyl-15-methylhexadecasphing-4-enine + H2O = 15-methylhexadecasphing-4-enine + a fatty acid. In terms of biological role, catalyzes the hydrolysis of ceramides into sphingoid base and free fatty acid. C.elegans contain specific sphingoid bases, which are unique or different in structure compared to the sphingoid bases found in other animals. Two examples of these distinctive compounds are: 15-methylhexadecasphinganine and 15-methylhexadecasphing-4-enine. This Caenorhabditis elegans protein is Probable acid ceramidase.